The following is a 92-amino-acid chain: Large ribosomal subunit protein bL25 (92 aa).

This sequence belongs to the bacterial ribosomal protein bL25 family. Part of the 50S ribosomal subunit; part of the 5S rRNA/L5/L18/L25 subcomplex. Contacts the 5S rRNA. Binds to the 5S rRNA independently of L5 and L18.

This is one of the proteins that binds to the 5S RNA in the ribosome where it forms part of the central protuberance. The protein is Large ribosomal subunit protein bL25 of Photobacterium profundum (strain SS9).